The primary structure comprises 417 residues: Inactive GDSL esterase/lipase-like protein 25 (417 aa).

The signal sequence occupies residues 1-50 (MLLIPSFTANSNEPPPSKLSLSDLSMAILKSHFFLLFPLLLLHFHTVSFA). 3 N-linked (GlcNAc...) asparagine glycosylation sites follow: Asn-160, Asn-308, and Asn-311. The active site involves His-331.

The protein belongs to the 'GDSL' lipolytic enzyme family. In terms of assembly, interacts with the PYK10 complex and TGG2, but not with TGG1 or PEN2. Expressed throughout the seedling, rosette leaves, roots, inflorescence and imbibed seed, but not in pollen.

It is found in the vacuole. The protein localises to the endoplasmic reticulum. Involved in organization of the endomembrane system and is required for endoplasmic reticulum morphology and organelle distribution. May act by inhibiting the formation of PYK10 complex by binding to GLL23 and exporting it from the ER. Required for proper subcellular localization of myrosinase TGG2. Has no lipase or esterase activity. The sequence is that of Inactive GDSL esterase/lipase-like protein 25 (MVP1) from Arabidopsis thaliana (Mouse-ear cress).